Consider the following 900-residue polypeptide: Peroxisomal hydratase-dehydrogenase-epimerase (900 aa).

2 short-chain dehydrogenase like regions span residues Ser-6 to Ser-230 and Ser-319 to Glu-535. Ile-14, Lys-53, Asn-100, Arg-133, Tyr-165, and Lys-169 together coordinate NADP(+). The Proton donor role is filled by Tyr-165. The active-site Lowers pKa of active site Tyr is the Lys-169. Positions 689, 690, 719, 803, 805, 826, 851, and 852 each coordinate (3R)-3-hydroxydecanoyl-CoA. The region spanning Glu-775–Asp-887 is the MaoC-like domain. Residues Ser-898–Leu-900 carry the Microbody targeting signal motif.

The protein belongs to the short-chain dehydrogenases/reductases (SDR) family. In terms of assembly, monomer.

The protein resides in the peroxisome. It catalyses the reaction a (3R)-3-hydroxyacyl-CoA = a (2E)-enoyl-CoA + H2O. The enzyme catalyses a (3R)-3-hydroxyacyl-CoA + NAD(+) = a 3-oxoacyl-CoA + NADH + H(+). The protein operates within lipid metabolism; fatty acid beta-oxidation. Its function is as follows. Second trifunctional enzyme acting on the beta-oxidation pathway for fatty acids, possessing hydratase-dehydrogenase-epimerase activities. Converts trans-2-enoyl-CoA via D-3-hydroxyacyl-CoA to 3-ketoacyl-CoA. This is Peroxisomal hydratase-dehydrogenase-epimerase (FOX2) from Saccharomyces cerevisiae (strain ATCC 204508 / S288c) (Baker's yeast).